Consider the following 324-residue polypeptide: Appendage-associated protein (324 aa).

Positions 1–32 are cleaved as a signal peptide; the sequence is MGCPVSRGGSPGCGRRIAEELRLAEDARLRLA. The stretch at 195–255 forms a coiled coil; the sequence is IAQAKEIAQA…AADKLQALGK (61 aa).

The protein localises to the secreted. In terms of biological role, associates with actin filament appendages that are formed in the inclusion appendages of the parasitophorous vacuole during infection of the host erythrocyte. This is Appendage-associated protein (aaaP1) from Anaplasma marginale (strain Florida).